The sequence spans 43 residues: Protein PsbN 2 (43 aa).

Residues 4 to 24 (ATILGISIAAALVGITVLALY) form a helical membrane-spanning segment.

This sequence belongs to the PsbN family.

The protein localises to the cellular thylakoid membrane. Functionally, may play a role in photosystem I and II biogenesis. This chain is Protein PsbN 2, found in Microcystis aeruginosa (strain NIES-843 / IAM M-2473).